We begin with the raw amino-acid sequence, 61 residues long: Large ribosomal subunit protein uL30 (61 aa).

This sequence belongs to the universal ribosomal protein uL30 family. As to quaternary structure, part of the 50S ribosomal subunit.

This is Large ribosomal subunit protein uL30 from Treponema denticola (strain ATCC 35405 / DSM 14222 / CIP 103919 / JCM 8153 / KCTC 15104).